Here is a 46-residue protein sequence, read N- to C-terminus: Photosystem II reaction center protein K (46 aa).

Residues 1-9 (MESILMIFA) constitute a propeptide that is removed on maturation. A helical membrane pass occupies residues 25 to 45 (LPVIPVLFLLLAFVWQAAVSF).

Belongs to the PsbK family. In terms of assembly, PSII is composed of 1 copy each of membrane proteins PsbA, PsbB, PsbC, PsbD, PsbE, PsbF, PsbH, PsbI, PsbJ, PsbK, PsbL, PsbM, PsbT, PsbX, PsbY, PsbZ, Psb30/Ycf12, at least 3 peripheral proteins of the oxygen-evolving complex and a large number of cofactors. It forms dimeric complexes.

It is found in the plastid. It localises to the chloroplast thylakoid membrane. Functionally, one of the components of the core complex of photosystem II (PSII). PSII is a light-driven water:plastoquinone oxidoreductase that uses light energy to abstract electrons from H(2)O, generating O(2) and a proton gradient subsequently used for ATP formation. It consists of a core antenna complex that captures photons, and an electron transfer chain that converts photonic excitation into a charge separation. The protein is Photosystem II reaction center protein K of Stigeoclonium helveticum (Green alga).